Reading from the N-terminus, the 259-residue chain is Thiazole synthase (259 aa).

Catalysis depends on Lys-99, which acts as the Schiff-base intermediate with DXP. Residues Gly-161, 187–188, and 209–210 each bind 1-deoxy-D-xylulose 5-phosphate; these read AG and NT.

The protein belongs to the ThiG family. In terms of assembly, homotetramer. Forms heterodimers with either ThiH or ThiS.

Its subcellular location is the cytoplasm. The catalysed reaction is [ThiS sulfur-carrier protein]-C-terminal-Gly-aminoethanethioate + 2-iminoacetate + 1-deoxy-D-xylulose 5-phosphate = [ThiS sulfur-carrier protein]-C-terminal Gly-Gly + 2-[(2R,5Z)-2-carboxy-4-methylthiazol-5(2H)-ylidene]ethyl phosphate + 2 H2O + H(+). The protein operates within cofactor biosynthesis; thiamine diphosphate biosynthesis. In terms of biological role, catalyzes the rearrangement of 1-deoxy-D-xylulose 5-phosphate (DXP) to produce the thiazole phosphate moiety of thiamine. Sulfur is provided by the thiocarboxylate moiety of the carrier protein ThiS. In vitro, sulfur can be provided by H(2)S. The sequence is that of Thiazole synthase from Sulfurimonas denitrificans (strain ATCC 33889 / DSM 1251) (Thiomicrospira denitrificans (strain ATCC 33889 / DSM 1251)).